We begin with the raw amino-acid sequence, 441 residues long: Ribosomal protein uS12 methylthiotransferase RimO (441 aa).

The region spanning 8–118 (PKIGFVSLGC…VLEHVHHYVP (111 aa)) is the MTTase N-terminal domain. [4Fe-4S] cluster-binding residues include C17, C53, C82, C150, C154, and C157. Residues 136 to 373 (LTPRHYAYLK…MQLQQQISAE (238 aa)) form the Radical SAM core domain. The TRAM domain occupies 376-441 (QEKVGREILV…DEYDLWGSRV (66 aa)).

This sequence belongs to the methylthiotransferase family. RimO subfamily. Requires [4Fe-4S] cluster as cofactor.

The protein resides in the cytoplasm. The enzyme catalyses L-aspartate(89)-[ribosomal protein uS12]-hydrogen + (sulfur carrier)-SH + AH2 + 2 S-adenosyl-L-methionine = 3-methylsulfanyl-L-aspartate(89)-[ribosomal protein uS12]-hydrogen + (sulfur carrier)-H + 5'-deoxyadenosine + L-methionine + A + S-adenosyl-L-homocysteine + 2 H(+). Its function is as follows. Catalyzes the methylthiolation of an aspartic acid residue of ribosomal protein uS12. This Shigella sonnei (strain Ss046) protein is Ribosomal protein uS12 methylthiotransferase RimO.